The primary structure comprises 377 residues: Phosphoserine aminotransferase (377 aa).

L-glutamate is bound at residue Arg-43. Pyridoxal 5'-phosphate contacts are provided by Trp-105, Thr-164, Asp-189, and Gln-212. The residue at position 213 (Lys-213) is an N6-(pyridoxal phosphate)lysine. Position 254–255 (Asn-254–Thr-255) interacts with pyridoxal 5'-phosphate.

Belongs to the class-V pyridoxal-phosphate-dependent aminotransferase family. SerC subfamily. Homodimer. Pyridoxal 5'-phosphate serves as cofactor.

The protein resides in the cytoplasm. It carries out the reaction O-phospho-L-serine + 2-oxoglutarate = 3-phosphooxypyruvate + L-glutamate. The enzyme catalyses 4-(phosphooxy)-L-threonine + 2-oxoglutarate = (R)-3-hydroxy-2-oxo-4-phosphooxybutanoate + L-glutamate. Its pathway is amino-acid biosynthesis; L-serine biosynthesis; L-serine from 3-phospho-D-glycerate: step 2/3. It participates in cofactor biosynthesis; pyridoxine 5'-phosphate biosynthesis; pyridoxine 5'-phosphate from D-erythrose 4-phosphate: step 3/5. In terms of biological role, catalyzes the reversible conversion of 3-phosphohydroxypyruvate to phosphoserine and of 3-hydroxy-2-oxo-4-phosphonooxybutanoate to phosphohydroxythreonine. In Bordetella pertussis (strain Tohama I / ATCC BAA-589 / NCTC 13251), this protein is Phosphoserine aminotransferase.